We begin with the raw amino-acid sequence, 453 residues long: Cytochrome b-c1 complex subunit 2, mitochondrial (453 aa).

The transit peptide at Met1–Tyr14 directs the protein to the mitochondrion. N6-acetyllysine occurs at positions 66, 199, and 250. Residue Ser368 is modified to Phosphoserine.

Belongs to the peptidase M16 family. UQCRC2/QCR2 subfamily. In terms of assembly, component of the ubiquinol-cytochrome c oxidoreductase (cytochrome b-c1 complex, complex III, CIII), a multisubunit enzyme composed of 11 subunits. The complex is composed of 3 respiratory subunits cytochrome b, cytochrome c1 and Rieske protein UQCRFS1, 2 core protein subunits UQCRC1/QCR1 and UQCRC2/QCR2, and 6 low-molecular weight protein subunits UQCRH/QCR6, UQCRB/QCR7, UQCRQ/QCR8, UQCR10/QCR9, UQCR11/QCR10 and subunit 9, the cleavage product of Rieske protein UQCRFS1. The complex exists as an obligatory dimer and forms supercomplexes (SCs) in the inner mitochondrial membrane with NADH-ubiquinone oxidoreductase (complex I, CI) and cytochrome c oxidase (complex IV, CIV), resulting in different assemblies (supercomplex SCI(1)III(2)IV(1) and megacomplex MCI(2)III(2)IV(2)). Interacts with RAB5IF. Interacts with STMP1. Post-translationally, acetylation of Lys-159 and Lys-250 is observed in liver mitochondria from fasted mice but not from fed mice. In terms of tissue distribution, expressed in neurons and astrocytes of the cerebral cortex and hippocampus (at protein level).

It is found in the mitochondrion inner membrane. Functionally, component of the ubiquinol-cytochrome c oxidoreductase, a multisubunit transmembrane complex that is part of the mitochondrial electron transport chain which drives oxidative phosphorylation. The respiratory chain contains 3 multisubunit complexes succinate dehydrogenase (complex II, CII), ubiquinol-cytochrome c oxidoreductase (cytochrome b-c1 complex, complex III, CIII) and cytochrome c oxidase (complex IV, CIV), that cooperate to transfer electrons derived from NADH and succinate to molecular oxygen, creating an electrochemical gradient over the inner membrane that drives transmembrane transport and the ATP synthase. The cytochrome b-c1 complex catalyzes electron transfer from ubiquinol to cytochrome c, linking this redox reaction to translocation of protons across the mitochondrial inner membrane, with protons being carried across the membrane as hydrogens on the quinol. In the process called Q cycle, 2 protons are consumed from the matrix, 4 protons are released into the intermembrane space and 2 electrons are passed to cytochrome c. The 2 core subunits UQCRC1/QCR1 and UQCRC2/QCR2 are homologous to the 2 mitochondrial-processing peptidase (MPP) subunits beta-MPP and alpha-MPP respectively, and they seem to have preserved their MPP processing properties. May be involved in the in situ processing of UQCRFS1 into the mature Rieske protein and its mitochondrial targeting sequence (MTS)/subunit 9 when incorporated into complex III. The sequence is that of Cytochrome b-c1 complex subunit 2, mitochondrial (Uqcrc2) from Mus musculus (Mouse).